The following is an 81-amino-acid chain: Cortexin-2 (81 aa).

The chain crosses the membrane as a helical span at residues 29 to 49 (TAFAFVGMLLVFLGLLIVRCF).

It belongs to the cortexin family.

The protein localises to the membrane. The polypeptide is Cortexin-2 (ctxn2) (Danio rerio (Zebrafish)).